Here is a 100-residue protein sequence, read N- to C-terminus: uncharacterized protein (100 aa).

It is found in the mitochondrion. This is an uncharacterized protein from Arabidopsis thaliana (Mouse-ear cress).